The chain runs to 322 residues: tRNA-dihydrouridine synthase B (322 aa).

FMN-binding positions include 16–18 (PMA) and Q70. C100 (proton donor) is an active-site residue. FMN contacts are provided by residues K139, 200-202 (NGD), and 224-225 (GR).

The protein belongs to the Dus family. DusB subfamily. Requires FMN as cofactor.

The enzyme catalyses a 5,6-dihydrouridine in tRNA + NAD(+) = a uridine in tRNA + NADH + H(+). It catalyses the reaction a 5,6-dihydrouridine in tRNA + NADP(+) = a uridine in tRNA + NADPH + H(+). Catalyzes the synthesis of 5,6-dihydrouridine (D), a modified base found in the D-loop of most tRNAs, via the reduction of the C5-C6 double bond in target uridines. In Shewanella oneidensis (strain ATCC 700550 / JCM 31522 / CIP 106686 / LMG 19005 / NCIMB 14063 / MR-1), this protein is tRNA-dihydrouridine synthase B.